A 194-amino-acid chain; its full sequence is Imidazoleglycerol-phosphate dehydratase (194 aa).

It belongs to the imidazoleglycerol-phosphate dehydratase family.

The protein localises to the cytoplasm. It carries out the reaction D-erythro-1-(imidazol-4-yl)glycerol 3-phosphate = 3-(imidazol-4-yl)-2-oxopropyl phosphate + H2O. The protein operates within amino-acid biosynthesis; L-histidine biosynthesis; L-histidine from 5-phospho-alpha-D-ribose 1-diphosphate: step 6/9. The polypeptide is Imidazoleglycerol-phosphate dehydratase (Streptococcus mutans serotype c (strain ATCC 700610 / UA159)).